We begin with the raw amino-acid sequence, 205 residues long: Metal-independent carbonic anhydrase (205 aa).

Positions 1–24 are cleaved as a signal peptide; sequence MNLFKPRILVLFAATALISGIAIV. The hydrogencarbonate site is built by T106 and Y124.

This sequence belongs to the iota-class carbonic anhydrase family. As to quaternary structure, homotetramer; dimer of dimers. It depends on Does not require a metal cofactor. as a cofactor.

The enzyme catalyses hydrogencarbonate + H(+) = CO2 + H2O. Its activity is regulated as follows. Activity is not affected by EDTA or 2,6-pyridinedicarboxylic acid (PDA). Activity is not affected by addition of most divalent metal ions, except zinc ions which decrease the activity. Inhibited by the iodide ion. Functionally, catalyzes the hydration of carbon dioxide (CO2) to bicarbonate (HCO3(-)). Has only very low bicarbonate dehydration activity. May function even in metal-poor environments. In Nostoc sp. (strain PCC 7120 / SAG 25.82 / UTEX 2576), this protein is Metal-independent carbonic anhydrase.